Reading from the N-terminus, the 910-residue chain is DNA repair and recombination protein RAD54B (910 aa).

A compositionally biased stretch (polar residues) spans 1 to 14; sequence MRRSAAPSQLQGNS. Positions 1–33 are disordered; it reads MRRSAAPSQLQGNSFKKPKFIPPGRSNPGLNEE. At Ser14 the chain carries Phosphoserine. One can recognise a Helicase ATP-binding domain in the interval 313–480; sequence GMRMNGRCGA…FALIDFVNPG (168 aa). ATP is bound at residue 326–333; the sequence is DEMGLGKT. The DEGH box signature appears at 431–434; the sequence is DEGH. One can recognise a Helicase C-terminal domain in the interval 649–810; it reads KLLAVIHELR…HIQFSVEELK (162 aa).

This sequence belongs to the SNF2/RAD54 helicase family. As to quaternary structure, interacts with RAD51 through the NH2-terminal domain. Immunoprecipitation experiments show that the interaction is constitutive and not induced by ionizing radiation. The interaction may be indirect. Abundantly expressed in testis and spleen. Relatively low levels observed in thymus, prostate, ovary and colon.

It is found in the nucleus. Its function is as follows. Involved in DNA repair and mitotic recombination. May play an active role in recombination processes in concert with other members of the RAD52 epistasis group. This is DNA repair and recombination protein RAD54B (RAD54B) from Homo sapiens (Human).